Consider the following 980-residue polypeptide: Envelope glycoprotein B (980 aa).

Over residues 1-14 the composition is skewed to polar residues; it reads MSSGCRSVGGSTWG. 2 disordered regions span residues 1–20 and 88–118; these read MSSG…RGDG and TTPS…TETP. A signal peptide spans 1–86; that stretch reads MSSGCRSVGG…LFGSCVVRAV (86 aa). The Virion surface segment spans residues 87 to 849; the sequence is PTTPSPPTST…SGIASFLNNP (763 aa). A compositionally biased stretch (low complexity) spans 96-118; it reads TPTSMSTHSHGTVDPTLLPTETP. 5 disulfide bridges follow: Cys140/Cys647, Cys157/Cys603, Cys231/Cys296, Cys389/Cys437, and Cys668/Cys708. Asn165 carries an N-linked (GlcNAc...) asparagine; by host glycan. Residues 197–203 form an involved in fusion and/or binding to host membrane region; that stretch reads VWKGYSH. Asn275 carries N-linked (GlcNAc...) asparagine; by host glycosylation. An involved in fusion and/or binding to host membrane region spans residues 282–290; sequence GWMPWRHYT. Residues Asn380, Asn423, Asn497, Asn514, Asn515, and Asn560 are each glycosylated (N-linked (GlcNAc...) asparagine; by host). Over residues 505-516 the composition is skewed to low complexity; that stretch reads LLNPNANNNNNT. The tract at residues 505-535 is disordered; sequence LLNPNANNNNNTTRRRRSLLSVPEPQPTQDG. Asn727 and Asn749 each carry an N-linked (GlcNAc...) asparagine; by host glycan. 2 hydrophobic membrane proximal region regions span residues 794-847 and 823-843; these read IDSV…SFLN and AVGT…SGIA. The helical transmembrane segment at 850–870 threads the bilayer; sequence FGGLAIGLLVIAGLVAAFFAY. Over 871–980 the chain is Intravirion; it reads RYVMQIRSNP…NDTMENEKMV (110 aa). A Golgi targeting motif is present at residues 925–928; that stretch reads YMSM. Positions 965–968 match the Internalization motif motif; the sequence is YTRL.

It belongs to the herpesviridae glycoprotein B family. In terms of assembly, homotrimer; disulfide-linked. Binds to heparan sulfate proteoglycans. Interacts with gH/gL heterodimer. Post-translationally, a proteolytic cleavage by host furin generates two subunits that remain linked by disulfide bonds.

The protein localises to the virion membrane. Its subcellular location is the host cell membrane. It is found in the host endosome membrane. It localises to the host Golgi apparatus membrane. Envelope glycoprotein that forms spikes at the surface of virion envelope. Essential for the initial attachment to heparan sulfate moieties of the host cell surface proteoglycans. Involved in fusion of viral and cellular membranes leading to virus entry into the host cell. Following initial binding to its host receptors, membrane fusion is mediated by the fusion machinery composed at least of gB and the heterodimer gH/gL. May be involved in the fusion between the virion envelope and the outer nuclear membrane during virion egress. This chain is Envelope glycoprotein B, found in Equus caballus (Horse).